A 372-amino-acid chain; its full sequence is UDP-N-acetylglucosamine--N-acetylmuramyl-(pentapeptide) pyrophosphoryl-undecaprenol N-acetylglucosamine transferase (372 aa).

UDP-N-acetyl-alpha-D-glucosamine contacts are provided by residues 16-18 (TGG), Asn-128, Arg-164, Ser-192, Ile-250, and Gln-295.

This sequence belongs to the glycosyltransferase 28 family. MurG subfamily.

It is found in the cell inner membrane. The catalysed reaction is di-trans,octa-cis-undecaprenyl diphospho-N-acetyl-alpha-D-muramoyl-L-alanyl-D-glutamyl-meso-2,6-diaminopimeloyl-D-alanyl-D-alanine + UDP-N-acetyl-alpha-D-glucosamine = di-trans,octa-cis-undecaprenyl diphospho-[N-acetyl-alpha-D-glucosaminyl-(1-&gt;4)]-N-acetyl-alpha-D-muramoyl-L-alanyl-D-glutamyl-meso-2,6-diaminopimeloyl-D-alanyl-D-alanine + UDP + H(+). Its pathway is cell wall biogenesis; peptidoglycan biosynthesis. Its function is as follows. Cell wall formation. Catalyzes the transfer of a GlcNAc subunit on undecaprenyl-pyrophosphoryl-MurNAc-pentapeptide (lipid intermediate I) to form undecaprenyl-pyrophosphoryl-MurNAc-(pentapeptide)GlcNAc (lipid intermediate II). In Paraburkholderia xenovorans (strain LB400), this protein is UDP-N-acetylglucosamine--N-acetylmuramyl-(pentapeptide) pyrophosphoryl-undecaprenol N-acetylglucosamine transferase.